The primary structure comprises 135 residues: Large ribosomal subunit protein eL32 (135 aa).

This sequence belongs to the eukaryotic ribosomal protein eL32 family.

The polypeptide is Large ribosomal subunit protein eL32 (rpl32e) (Methanococcus maripaludis (strain DSM 14266 / JCM 13030 / NBRC 101832 / S2 / LL)).